The primary structure comprises 499 residues: Inosine-5'-monophosphate dehydrogenase (499 aa).

CBS domains lie at 106–165 (IDRE…SDAV) and 169–225 (MTDE…GSAA). NAD(+) is bound by residues D260 and 308–310 (GIG). 2 residues coordinate K(+): G310 and G312. S313 is an IMP binding site. C315 provides a ligand contact to K(+). C315 (thioimidate intermediate) is an active-site residue. IMP-binding positions include 348–350 (DGG), 371–372 (GS), and 395–399 (YRGMG). R411 (proton acceptor) is an active-site residue. E425 contributes to the IMP binding site. E479, G480, and H481 together coordinate K(+). Residues 480 to 499 (GHPHDVMITDEAPNYSPQGE) are disordered.

This sequence belongs to the IMPDH/GMPR family. Homotetramer. The cofactor is K(+).

The enzyme catalyses IMP + NAD(+) + H2O = XMP + NADH + H(+). Its pathway is purine metabolism; XMP biosynthesis via de novo pathway; XMP from IMP: step 1/1. Its activity is regulated as follows. Mycophenolic acid (MPA) is a non-competitive inhibitor that prevents formation of the closed enzyme conformation by binding to the same site as the amobile flap. In contrast, mizoribine monophosphate (MZP) is a competitive inhibitor that induces the closed conformation. MPA is a potent inhibitor of mammalian IMPDHs but a poor inhibitor of the bacterial enzymes. MZP is a more potent inhibitor of bacterial IMPDH. Catalyzes the conversion of inosine 5'-phosphate (IMP) to xanthosine 5'-phosphate (XMP), the first committed and rate-limiting step in the de novo synthesis of guanine nucleotides, and therefore plays an important role in the regulation of cell growth. This chain is Inosine-5'-monophosphate dehydrogenase, found in Halobacterium salinarum (strain ATCC 700922 / JCM 11081 / NRC-1) (Halobacterium halobium).